We begin with the raw amino-acid sequence, 402 residues long: NADH-quinone oxidoreductase subunit D 2 (402 aa).

The protein belongs to the complex I 49 kDa subunit family. In terms of assembly, NDH-1 is composed of 14 different subunits. Subunits NuoB, C, D, E, F, and G constitute the peripheral sector of the complex.

It localises to the cell inner membrane. The catalysed reaction is a quinone + NADH + 5 H(+)(in) = a quinol + NAD(+) + 4 H(+)(out). In terms of biological role, NDH-1 shuttles electrons from NADH, via FMN and iron-sulfur (Fe-S) centers, to quinones in the respiratory chain. The immediate electron acceptor for the enzyme in this species is believed to be ubiquinone. Couples the redox reaction to proton translocation (for every two electrons transferred, four hydrogen ions are translocated across the cytoplasmic membrane), and thus conserves the redox energy in a proton gradient. The protein is NADH-quinone oxidoreductase subunit D 2 of Nitrobacter hamburgensis (strain DSM 10229 / NCIMB 13809 / X14).